Here is a 191-residue protein sequence, read N- to C-terminus: dTTP/UTP pyrophosphatase (191 aa).

Catalysis depends on Asp71, which acts as the Proton acceptor.

Belongs to the Maf family. YhdE subfamily. The cofactor is a divalent metal cation.

The protein localises to the cytoplasm. The catalysed reaction is dTTP + H2O = dTMP + diphosphate + H(+). It catalyses the reaction UTP + H2O = UMP + diphosphate + H(+). Its function is as follows. Nucleoside triphosphate pyrophosphatase that hydrolyzes dTTP and UTP. May have a dual role in cell division arrest and in preventing the incorporation of modified nucleotides into cellular nucleic acids. The polypeptide is dTTP/UTP pyrophosphatase (Hyphomonas neptunium (strain ATCC 15444)).